Consider the following 315-residue polypeptide: Ester hydrolase C11orf54 homolog (315 aa).

Residues histidine 266, histidine 268, and histidine 278 each contribute to the Zn(2+) site.

In terms of assembly, monomer.

It localises to the nucleus. Functionally, exhibits ester hydrolase activity on the substrate p-nitrophenyl acetate. This chain is Ester hydrolase C11orf54 homolog, found in Bos taurus (Bovine).